Consider the following 386-residue polypeptide: Acyl-[acyl-carrier-protein] dehydrogenase MbtN (386 aa).

Belongs to the acyl-CoA dehydrogenase family. It depends on FAD as a cofactor.

The protein operates within siderophore biosynthesis; mycobactin biosynthesis. Functionally, catalyzes the dehydrogenation at the alpha-beta position of ACP-bound acyl chains. This results in the introduction of a double bond in the lipidic chain, which is further transferred to the epsilon-amino group of lysine residue in the mycobactin core by MbtK. The sequence is that of Acyl-[acyl-carrier-protein] dehydrogenase MbtN (mbtN) from Mycobacterium bovis (strain ATCC BAA-935 / AF2122/97).